A 412-amino-acid polypeptide reads, in one-letter code: MLNQQQTYKLLERFLHYTTYDTQSKSGAKISPSSAGQLKLAKHLQQELFALGLQDIDISKHSVVTAFLPSNVNPHSPTIGFIAHLDTATQCSGKNVQAEVIENYRGGDIALGVGEEFISPAHYQFLHQLIGKTLVVADGNTLLGADNKAGIAEIMTALAVLKEENLPHCNIRVAFTPDEEIGLGMQFFPVEKFPCDWAYTIDGGEVGELEYENFNAATAIVTIEGVNMHTGSAKDKMINALTLACEFQQGFPAEETPEQTEGKQGFYHLSHFTGHVEKVELQYLIRDFDRDGFEQRKIFIQQLVDRFNQQKRLKKPITLEIKDSYKNMNEVVKTVPQSVELADSAMRECGIEPIHKAIRGGTDGAWLAEQGLACPNVFTGGYNFHSKHELITLEGMQSAVNVITTIVRLATS.

A Zn(2+)-binding site is contributed by H84. Residue D86 is part of the active site. Residue D146 participates in Zn(2+) binding. E179 (proton acceptor) is an active-site residue. Residues E180, D202, and H385 each coordinate Zn(2+).

This sequence belongs to the peptidase M20B family. Zn(2+) serves as cofactor.

Its subcellular location is the cytoplasm. It carries out the reaction Release of the N-terminal residue from a tripeptide.. In terms of biological role, cleaves the N-terminal amino acid of tripeptides. This chain is Peptidase T, found in Pasteurella multocida (strain Pm70).